The following is a 256-amino-acid chain: uncharacterized protein (256 aa).

The next 6 helical transmembrane spans lie at 6–26, 29–49, 61–81, 145–165, 175–195, and 218–238; these read TSFI…VSFL, LALV…GTFI, ISGT…GLYF, IIGC…TGIA, YYFK…IWLI, and IGWL…AIQF.

It belongs to the DedA family.

The protein localises to the cell membrane. This is an uncharacterized protein from Buchnera aphidicola subsp. Acyrthosiphon pisum (strain APS) (Acyrthosiphon pisum symbiotic bacterium).